Here is a 206-residue protein sequence, read N- to C-terminus: Protein GrpE (206 aa).

The span at 1–15 (MTDSNGQKDNNQDQA) shows a compositional bias: polar residues. The disordered stretch occupies residues 1–38 (MTDSNGQKDNNQDQAQPADPVVSKPYIMPDDPEEGTNE).

Belongs to the GrpE family. In terms of assembly, homodimer.

It is found in the cytoplasm. In terms of biological role, participates actively in the response to hyperosmotic and heat shock by preventing the aggregation of stress-denatured proteins, in association with DnaK and GrpE. It is the nucleotide exchange factor for DnaK and may function as a thermosensor. Unfolded proteins bind initially to DnaJ; upon interaction with the DnaJ-bound protein, DnaK hydrolyzes its bound ATP, resulting in the formation of a stable complex. GrpE releases ADP from DnaK; ATP binding to DnaK triggers the release of the substrate protein, thus completing the reaction cycle. Several rounds of ATP-dependent interactions between DnaJ, DnaK and GrpE are required for fully efficient folding. This chain is Protein GrpE, found in Rhodopseudomonas palustris (strain BisB5).